Reading from the N-terminus, the 179-residue chain is Large ribosomal subunit protein uL5 (179 aa).

The protein belongs to the universal ribosomal protein uL5 family. In terms of assembly, part of the 50S ribosomal subunit; part of the 5S rRNA/L5/L18/L25 subcomplex. Contacts the 5S rRNA and the P site tRNA. Forms a bridge to the 30S subunit in the 70S ribosome.

Functionally, this is one of the proteins that bind and probably mediate the attachment of the 5S RNA into the large ribosomal subunit, where it forms part of the central protuberance. In the 70S ribosome it contacts protein S13 of the 30S subunit (bridge B1b), connecting the 2 subunits; this bridge is implicated in subunit movement. Contacts the P site tRNA; the 5S rRNA and some of its associated proteins might help stabilize positioning of ribosome-bound tRNAs. The chain is Large ribosomal subunit protein uL5 from Neisseria meningitidis serogroup A / serotype 4A (strain DSM 15465 / Z2491).